A 791-amino-acid polypeptide reads, in one-letter code: Interleukin-17 receptor C (791 aa).

An N-terminal signal peptide occupies residues 1–20 (MPVPWFLLSLALGRSPVVLS). The Extracellular segment spans residues 21-538 (LERLVGPQDA…CPMDKYIHKR (518 aa)). N-linked (GlcNAc...) asparagine glycosylation is found at asparagine 189 and asparagine 257. A disulfide bridge connects residues cysteine 265 and cysteine 277. Asparagine 284, asparagine 297, asparagine 324, and asparagine 334 each carry an N-linked (GlcNAc...) asparagine glycan. 3 cysteine pairs are disulfide-bonded: cysteine 341–cysteine 391, cysteine 343–cysteine 359, and cysteine 400–cysteine 409. N-linked (GlcNAc...) asparagine glycans are attached at residues asparagine 420, asparagine 443, and asparagine 477. Cysteine 439 and cysteine 453 are joined by a disulfide. 2 cysteine pairs are disulfide-bonded: cysteine 481–cysteine 488 and cysteine 515–cysteine 529. The chain crosses the membrane as a helical span at residues 539-559 (WALVWLACLLFAAALSLILLL). The Cytoplasmic segment spans residues 560-791 (KKDHAKGWLR…GAGPGAGDGT (232 aa)). The region spanning 583 to 735 (GRAALLLYSA…LPSQLPDFLG (153 aa)) is the SEFIR domain. Residues 762–791 (ALDSYFHPPGTPAPGRGVGPGAGPGAGDGT) are disordered. Gly residues predominate over residues 777 to 791 (RGVGPGAGPGAGDGT).

Homodimer; disulfide-linked. Heterodimer with IL17RA. Heterodimerization with IL17RA is independent of the cytoplasmic tail. Associates with non-glycosylated IL17RA constitutively. Binding of IL17A and IL17F induces association with glycosylated IL17RA. Forms complexes with 2:1 binding stoichiometry: two receptor chains for one interleukin molecule. IL17A homodimer preferentially drives the formation of IL17RA-IL17RC heterodimeric receptor complex, whereas IL17F homodimer forms predominantly complexes with IL17RC homodimer. IL17A-IL17F forms complexes with IL17RA-IL17RC, but with lower affinity when compared to IL17A homodimer. IL17RC chain cannot distinguish between IL17A and IL17F molecules, potentially enabling the formation of topologically distinct complexes. Interacts (through SEFIR domain and extended downstream region) with TRAF3IP2/ACT1 (phosphorylated). In terms of tissue distribution, expressed in prostate, skeletal muscle, kidney and placenta (at protein level). Expressed in brain, cartilage, colon, heart, intestine, kidney, liver, lung, muscle, placenta, and prostate. Also detected in thyroid, trachea and adrenal gland. Low expression in thymus and leukocytes.

The protein localises to the cell membrane. In terms of biological role, receptor for IL17A and IL17F, major effector cytokines of innate and adaptive immune system involved in antimicrobial host defense and maintenance of tissue integrity. Receptor for IL17A and IL17F, major effector cytokines of innate and adaptive immune system involved in antimicrobial host defense and maintenance of tissue integrity. Receptor for IL17A and IL17F homodimers as part of a heterodimeric complex with IL17RA. Receptor for the heterodimer formed by IL17A and IL17B as part of a heterodimeric complex with IL17RA. Has also been shown to be the cognate receptor for IL17F and to bind IL17A with high affinity without the need for IL17RA. Upon binding of IL17F homodimer triggers downstream activation of TRAF6 and NF-kappa-B signaling pathway. Induces transcriptional activation of IL33, a potent cytokine that stimulates group 2 innate lymphoid cells and adaptive T-helper 2 cells involved in pulmonary allergic response to fungi. Promotes sympathetic innervation of peripheral organs by coordinating the communication between gamma-delta T cells and parenchymal cells. Stimulates sympathetic innervation of thermogenic adipose tissue by driving TGFB1 expression. Binding of IL17A-IL17F to IL17RA-IL17RC heterodimeric receptor complex triggers homotypic interaction of IL17RA and IL17RC chains with TRAF3IP2 adapter through SEFIR domains. This leads to downstream TRAF6-mediated activation of NF-kappa-B and MAPkinase pathways ultimately resulting in transcriptional activation of cytokines, chemokines, antimicrobial peptides and matrix metalloproteinases, with potential strong immune inflammation. Primarily induces neutrophil activation and recruitment at infection and inflammatory sites. Stimulates the production of antimicrobial beta-defensins DEFB1, DEFB103A, and DEFB104A by mucosal epithelial cells, limiting the entry of microbes through the epithelial barriers. Its function is as follows. Receptor for both IL17A and IL17F. Does not bind IL17A or IL17F. The protein is Interleukin-17 receptor C (IL17RC) of Homo sapiens (Human).